A 461-amino-acid chain; its full sequence is Alcaligin biosynthesis enzyme (461 aa).

9 to 15 provides a ligand contact to FAD; sequence VAIGIGP.

Belongs to the lysine N(6)-hydroxylase/L-ornithine N(5)-oxygenase family. It depends on FAD as a cofactor.

It participates in siderophore biosynthesis; alcaligin biosynthesis. The sequence is that of Alcaligin biosynthesis enzyme (alcA) from Bordetella bronchiseptica (strain ATCC BAA-588 / NCTC 13252 / RB50) (Alcaligenes bronchisepticus).